Consider the following 578-residue polypeptide: Isocitrate dehydrogenase kinase/phosphatase (578 aa).

Residues 315-321 (APGIRGM) and Lys-336 contribute to the ATP site. Asp-371 is a catalytic residue.

This sequence belongs to the AceK family.

Its subcellular location is the cytoplasm. It catalyses the reaction L-seryl-[isocitrate dehydrogenase] + ATP = O-phospho-L-seryl-[isocitrate dehydrogenase] + ADP + H(+). Functionally, bifunctional enzyme which can phosphorylate or dephosphorylate isocitrate dehydrogenase (IDH) on a specific serine residue. This is a regulatory mechanism which enables bacteria to bypass the Krebs cycle via the glyoxylate shunt in response to the source of carbon. When bacteria are grown on glucose, IDH is fully active and unphosphorylated, but when grown on acetate or ethanol, the activity of IDH declines drastically concomitant with its phosphorylation. This is Isocitrate dehydrogenase kinase/phosphatase from Shigella dysenteriae serotype 1 (strain Sd197).